The following is a 152-amino-acid chain: Small ribosomal subunit protein uS15 (152 aa).

The span at 1–11 (MARMHARRRGK) shows a compositional bias: basic residues. Positions 1–25 (MARMHARRRGKSSSVRPARNEAPAW) are disordered.

This sequence belongs to the universal ribosomal protein uS15 family. As to quaternary structure, part of the 30S ribosomal subunit.

The chain is Small ribosomal subunit protein uS15 from Methanoregula boonei (strain DSM 21154 / JCM 14090 / 6A8).